Here is a 251-residue protein sequence, read N- to C-terminus: 2,3-bisphosphoglycerate-dependent phosphoglycerate mutase (251 aa).

Residues 11 to 18 (RHGNSDWN), 24 to 25 (TG), Arg-63, 90 to 93 (ERHY), Lys-101, 117 to 118 (RR), and 185 to 186 (GN) contribute to the substrate site. His-12 serves as the catalytic Tele-phosphohistidine intermediate. The Proton donor/acceptor role is filled by Glu-90.

It belongs to the phosphoglycerate mutase family. BPG-dependent PGAM subfamily.

It carries out the reaction (2R)-2-phosphoglycerate = (2R)-3-phosphoglycerate. Its pathway is carbohydrate degradation; glycolysis; pyruvate from D-glyceraldehyde 3-phosphate: step 3/5. Catalyzes the interconversion of 2-phosphoglycerate and 3-phosphoglycerate. In Clavibacter sepedonicus (Clavibacter michiganensis subsp. sepedonicus), this protein is 2,3-bisphosphoglycerate-dependent phosphoglycerate mutase.